We begin with the raw amino-acid sequence, 508 residues long: Photosystem II CP47 reaction center protein (508 aa).

6 helical membrane-spanning segments follow: residues 21-36, 101-115, 140-156, 203-218, 237-252, and 457-472; these read SVHI…WAGS, IVFS…IWHW, GIHL…FGAF, IAAG…FHLS, VLSS…AFVV, and SFAL…HGAR.

It belongs to the PsbB/PsbC family. PsbB subfamily. In terms of assembly, PSII is composed of 1 copy each of membrane proteins PsbA, PsbB, PsbC, PsbD, PsbE, PsbF, PsbH, PsbI, PsbJ, PsbK, PsbL, PsbM, PsbT, PsbX, PsbY, PsbZ, Psb30/Ycf12, at least 3 peripheral proteins of the oxygen-evolving complex and a large number of cofactors. It forms dimeric complexes. Binds multiple chlorophylls. PSII binds additional chlorophylls, carotenoids and specific lipids. is required as a cofactor.

It is found in the plastid. The protein localises to the chloroplast thylakoid membrane. Functionally, one of the components of the core complex of photosystem II (PSII). It binds chlorophyll and helps catalyze the primary light-induced photochemical processes of PSII. PSII is a light-driven water:plastoquinone oxidoreductase, using light energy to abstract electrons from H(2)O, generating O(2) and a proton gradient subsequently used for ATP formation. The protein is Photosystem II CP47 reaction center protein of Aethionema grandiflorum (Persian stone-cress).